The chain runs to 1071 residues: ATP-dependent helicase/deoxyribonuclease subunit B (1071 aa).

This sequence belongs to the helicase family. AddB/RexB type 2 subfamily. As to quaternary structure, heterodimer of AddA and RexB. Requires Mg(2+) as cofactor.

In terms of biological role, the heterodimer acts as both an ATP-dependent DNA helicase and an ATP-dependent, dual-direction single-stranded exonuclease. Recognizes the chi site generating a DNA molecule suitable for the initiation of homologous recombination. This subunit has 5' -&gt; 3' nuclease activity but not helicase activity. This is ATP-dependent helicase/deoxyribonuclease subunit B from Streptococcus pyogenes serotype M49 (strain NZ131).